Reading from the N-terminus, the 332-residue chain is Phosphoribosylformylglycinamidine cyclo-ligase (332 aa).

The protein belongs to the AIR synthase family.

It is found in the cytoplasm. It carries out the reaction 2-formamido-N(1)-(5-O-phospho-beta-D-ribosyl)acetamidine + ATP = 5-amino-1-(5-phospho-beta-D-ribosyl)imidazole + ADP + phosphate + H(+). Its pathway is purine metabolism; IMP biosynthesis via de novo pathway; 5-amino-1-(5-phospho-D-ribosyl)imidazole from N(2)-formyl-N(1)-(5-phospho-D-ribosyl)glycinamide: step 2/2. The protein is Phosphoribosylformylglycinamidine cyclo-ligase of Clostridium acetobutylicum (strain ATCC 824 / DSM 792 / JCM 1419 / IAM 19013 / LMG 5710 / NBRC 13948 / NRRL B-527 / VKM B-1787 / 2291 / W).